The following is a 208-amino-acid chain: Large ribosomal subunit protein uL3 (208 aa).

The disordered stretch occupies residues 116–146 (GFQGAIKRHGQSRGPMAHGSRYHRRPGSMGP).

Belongs to the universal ribosomal protein uL3 family. In terms of assembly, part of the 50S ribosomal subunit. Forms a cluster with proteins L14 and L19.

Its function is as follows. One of the primary rRNA binding proteins, it binds directly near the 3'-end of the 23S rRNA, where it nucleates assembly of the 50S subunit. This chain is Large ribosomal subunit protein uL3, found in Streptococcus mutans serotype c (strain ATCC 700610 / UA159).